We begin with the raw amino-acid sequence, 501 residues long: Growth/differentiation factor 5 (501 aa).

Positions 1 to 27 (MRLPKLLTFLLWYLAWLDLEFICTVLG) are cleaved as a signal peptide. Positions 28–381 (APDLGQRPQG…YLFSQRRKRR (354 aa)) are excised as a propeptide. The segment at 29 to 169 (PDLGQRPQGT…EPFRPPPITP (141 aa)) is disordered. Pro residues predominate over residues 99-111 (PRPGGPEPKPGHP). Basic and acidic residues predominate over residues 148–162 (KAREPGPPREPKEPF). N-linked (GlcNAc...) asparagine glycosylation is present at Asn189. The disordered stretch occupies residues 246–265 (PSDTAKPAAPGGGRAAQLKL). Intrachain disulfides connect Cys400–Cys466, Cys429–Cys498, and Cys433–Cys500.

This sequence belongs to the TGF-beta family. Homodimer; disulfide-linked. Interacts with serine proteases, HTRA1 and HTRA3. Following LPS binding, may form a complex with CXCR4, HSP90AA1 and HSPA8. Interacts with high affinity with NOG; inhibits chondrogenesis. Interacts with high affinity with BMPR1B and lower affinity with BMPR1A; positively regulates chondrocyte differentiation and induces SMAD dependent signaling. Interacts with FBN1 (via N-terminal domain) and FBN2. Interacts with TGFBR3. As to expression, predominantly expressed in long bones during embryonic development. Expressed in monocytes (at protein level).

The protein localises to the secreted. The protein resides in the cell membrane. Growth factor involved in bone and cartilage formation. During cartilage development regulates differentiation of chondrogenic tissue through two pathways. Firstly, positively regulates differentiation of chondrogenic tissue through its binding of high affinity with BMPR1B and of less affinity with BMPR1A, leading to induction of SMAD1-SMAD5-SMAD8 complex phosphorylation and then SMAD protein signaling transduction. Secondly, negatively regulates chondrogenic differentiation through its interaction with NOG. Required to prevent excessive muscle loss upon denervation. This function requires SMAD4 and is mediated by phosphorylated SMAD1/5/8. Binds bacterial lipopolysaccharide (LPS) and mediates LPS-induced inflammatory response, including TNF secretion by monocytes. The chain is Growth/differentiation factor 5 (GDF5) from Homo sapiens (Human).